The following is a 1470-amino-acid chain: Collagen alpha-1(XVII) chain (1470 aa).

3 disordered regions span residues 1–155, 167–193, and 422–452; these read MDVT…PSTR, KGSR…GTVE, and SAEN…GGAS. The Cytoplasmic segment spans residues 1-476; the sequence is MDVTKKSKRD…CGSCCSWWKW (476 aa). The tract at residues 1–573 is nonhelical region (NC16); the sequence is MDVTKKSKRD…MTEQENGNLR (573 aa). Residues 9 to 19 show a composition bias toward basic and acidic residues; sequence RDGTEVTERIV. The segment covering 60-74 has biased composition (low complexity); it reads GSSGYINSSGSIRGN. 3 stretches are compositionally biased toward polar residues: residues 75–96, 111–120, and 170–184; these read ASTS…SPGS, EGSSSGNSSP, and RSAS…SNTL. A necessary for interaction with DST and for the recruitment of DST to hemidesmosome region spans residues 146 to 231; it reads RLQSASPSTR…WSSTLPAGSS (86 aa). The segment covering 430–452 has biased composition (gly residues); it reads RGGGGGRGKGGGAGGGGGGGGAS. Residues 477–497 form a helical; Signal-anchor for type II membrane protein membrane-spanning segment; sequence LLGLLLTWLLLLGLLFGLIAL. Topologically, residues 498 to 1470 are extracellular; sequence AEEVRKLKAR…RRKRSIAIKP (973 aa). Serine 551 bears the Phosphoserine; by CK2 mark. 5 disordered regions span residues 568-873, 885-999, 1159-1181, 1194-1220, and 1249-1298; these read ENGN…FLSS, GVDL…SSSG, DYRN…NAWS, TAGL…GVSA, and FIVG…TNGG. The interval 574 to 1456 is triple-helical region; that stretch reads GSPGPKGDMG…KGEKGDKGDQ (883 aa). The span at 597–609 shows a compositional bias: pro residues; it reads PGIPGPLGHPGPE. 2 stretches are compositionally biased toward low complexity: residues 742–755 and 781–803; these read EPGA…AGAD and DPGK…PGRP. Over residues 827–848 the composition is skewed to pro residues; it reads PGPPGPPGAMGPPGPPGTPGPA. The span at 850 to 873 shows a compositional bias: low complexity; that stretch reads PAGLPGQQGPRGEPGLAGDSFLSS. 6 stretches are compositionally biased toward pro residues: residues 891–914, 940–949, 982–992, 1166–1175, 1201–1215, and 1253–1262; these read PPGP…PRGP, PPGPPGPPGP, PPGPPGPPGPP, PPGPPGPPGM, PGPP…PRGP, and PPGPPGPQGP. N-linked (GlcNAc...) asparagine glycosylation is present at asparagine 1273. Residues 1275 to 1290 are compositionally biased toward low complexity; it reads SSNSSARRGTSYSSST. A glycan (N-linked (GlcNAc...) asparagine) is linked at asparagine 1395. Positions 1406–1470 are disordered; the sequence is TYGTIPGPPG…RRKRSIAIKP (65 aa). Over residues 1434 to 1443 the composition is skewed to pro residues; the sequence is PRGPPGPPGP. Residues 1446-1455 show a composition bias toward basic and acidic residues; it reads NKGEKGDKGD. The interval 1457–1470 is nonhelical region (NC1); sequence VYTGRRKRSIAIKP. Positions 1460–1470 are enriched in basic residues; it reads GRRKRSIAIKP.

As to quaternary structure, homotrimers of alpha 1(XVII)chains. Interacts (via cytoplasmic region) with ITGB4 (via cytoplasmic region). Interacts (via cytoplasmic region) with DST (via N-terminus). Interacts (via N-terminus) with PLEC. Interacts (via cytoplasmic region) with DSP. Post-translationally, the intracellular/endo domain is disulfide-linked. Prolines at the third position of the tripeptide repeating unit (G-X-Y) are hydroxylated in some or all of the chains. In terms of processing, the ectodomain is shedded from the surface of keratinocytes resulting in a 120-kDa soluble form, also named as 120 kDa linear IgA disease antigen homolog. The shedding is mediated by membrane-bound metalloproteases. This cleavage is inhibited by phosphorylation at Ser-551.

It localises to the cell junction. Its subcellular location is the hemidesmosome. It is found in the membrane. The protein resides in the secreted. The protein localises to the extracellular space. It localises to the extracellular matrix. Its subcellular location is the basement membrane. Functionally, may play a role in the integrity of hemidesmosome and the attachment of basal keratinocytes to the underlying basement membrane. The 120 kDa linear IgA disease antigen homolog is an anchoring filament component involved in dermal-epidermal cohesion. The protein is Collagen alpha-1(XVII) chain (Col17a1) of Mus musculus (Mouse).